A 283-amino-acid chain; its full sequence is Pantothenate synthetase (283 aa).

30 to 37 is an ATP binding site; the sequence is MGNLHNGH. Histidine 37 functions as the Proton donor in the catalytic mechanism. (R)-pantoate is bound at residue glutamine 61. Glutamine 61 is a beta-alanine binding site. 149–152 serves as a coordination point for ATP; sequence GEKD. Glutamine 155 is a (R)-pantoate binding site. Position 186 to 189 (186 to 189) interacts with ATP; that stretch reads LSSR.

This sequence belongs to the pantothenate synthetase family. In terms of assembly, homodimer.

The protein localises to the cytoplasm. It carries out the reaction (R)-pantoate + beta-alanine + ATP = (R)-pantothenate + AMP + diphosphate + H(+). Its pathway is cofactor biosynthesis; (R)-pantothenate biosynthesis; (R)-pantothenate from (R)-pantoate and beta-alanine: step 1/1. Functionally, catalyzes the condensation of pantoate with beta-alanine in an ATP-dependent reaction via a pantoyl-adenylate intermediate. This is Pantothenate synthetase from Shigella flexneri serotype 5b (strain 8401).